A 1330-amino-acid chain; its full sequence is Nephrocystin-3 (1330 aa).

Gly2 carries N-myristoyl glycine lipidation. The stretch at 83–207 (ELEYAAAEYE…QRLQAQGIQV (125 aa)) forms a coiled coil. TPR repeat units lie at residues 471 to 504 (IPEE…AHEL), 885 to 918 (CLLN…KSAM), 920 to 942 (TEYF…MSCL), 943 to 976 (ADLY…RETA), 985 to 1018 (AQSL…SENA), 1027 to 1060 (AREL…HQKA), 1093 to 1126 (ARTL…RERV), 1135 to 1168 (AQSL…RRRA), 1177 to 1210 (AYTV…RQKS), 1219 to 1252 (ATAL…YEDS), and 1261 to 1294 (GETL…KEAE). The disordered stretch occupies residues 1296-1330 (SLLGGKAPSRHSSSGDTFSLKTAHSPNVFLQQGQR). Over residues 1305 to 1330 (RHSSSGDTFSLKTAHSPNVFLQQGQR) the composition is skewed to polar residues.

In terms of assembly, interacts with NPHP1 and INVS/NPHP2. Interacts (when myristoylated) with UNC119 and UNC119B; interaction is required for localization to cilium. Interacts with CEP164. Component of a complex containing at least ANKS6, INVS, NEK8 and NPHP3. ANKS6 may organize complex assembly by linking INVS and NPHP3 to NEK8 and INVS may target the complex to the proximal ciliary axoneme. In terms of tissue distribution, widely expressed at low level. Expressed in heart, placenta, liver, skeletal muscle, kidney and pancreas. Expressed at very low level in brain and lung.

The protein localises to the cell projection. It localises to the cilium. Functionally, required for normal ciliary development and function. Inhibits disheveled-1-induced canonical Wnt-signaling activity and may also play a role in the control of non-canonical Wnt signaling which regulates planar cell polarity. Probably acts as a molecular switch between different Wnt signaling pathways. Required for proper convergent extension cell movements. In Homo sapiens (Human), this protein is Nephrocystin-3 (NPHP3).